The chain runs to 227 residues: Cytochrome c oxidase subunit 2 (227 aa).

Over 1 to 14 (MAYPFQLGLQDATS) the chain is Mitochondrial intermembrane. The helical transmembrane segment at 15 to 45 (PIMEELLHFHDHTLMIVFLISSLVLYIISLM) threads the bilayer. Topologically, residues 46–59 (LTTKLTHTSTMDAQ) are mitochondrial matrix. A helical transmembrane segment spans residues 60-87 (EVETVWTILPAIILILIALPSLRILYMM). At 88–227 (DEINNPSLTV…YFEAWSALMV (140 aa)) the chain is on the mitochondrial intermembrane side. Residues His-161, Cys-196, Glu-198, Cys-200, His-204, and Met-207 each coordinate Cu cation. Glu-198 lines the Mg(2+) pocket. Residue Tyr-218 is modified to Phosphotyrosine.

The protein belongs to the cytochrome c oxidase subunit 2 family. Component of the cytochrome c oxidase (complex IV, CIV), a multisubunit enzyme composed of 14 subunits. The complex is composed of a catalytic core of 3 subunits MT-CO1, MT-CO2 and MT-CO3, encoded in the mitochondrial DNA, and 11 supernumerary subunits COX4I, COX5A, COX5B, COX6A, COX6B, COX6C, COX7A, COX7B, COX7C, COX8 and NDUFA4, which are encoded in the nuclear genome. The complex exists as a monomer or a dimer and forms supercomplexes (SCs) in the inner mitochondrial membrane with NADH-ubiquinone oxidoreductase (complex I, CI) and ubiquinol-cytochrome c oxidoreductase (cytochrome b-c1 complex, complex III, CIII), resulting in different assemblies (supercomplex SCI(1)III(2)IV(1) and megacomplex MCI(2)III(2)IV(2)). Found in a complex with TMEM177, COA6, COX18, COX20, SCO1 and SCO2. Interacts with TMEM177 in a COX20-dependent manner. Interacts with COX20. Interacts with COX16. It depends on Cu cation as a cofactor.

It is found in the mitochondrion inner membrane. It catalyses the reaction 4 Fe(II)-[cytochrome c] + O2 + 8 H(+)(in) = 4 Fe(III)-[cytochrome c] + 2 H2O + 4 H(+)(out). Functionally, component of the cytochrome c oxidase, the last enzyme in the mitochondrial electron transport chain which drives oxidative phosphorylation. The respiratory chain contains 3 multisubunit complexes succinate dehydrogenase (complex II, CII), ubiquinol-cytochrome c oxidoreductase (cytochrome b-c1 complex, complex III, CIII) and cytochrome c oxidase (complex IV, CIV), that cooperate to transfer electrons derived from NADH and succinate to molecular oxygen, creating an electrochemical gradient over the inner membrane that drives transmembrane transport and the ATP synthase. Cytochrome c oxidase is the component of the respiratory chain that catalyzes the reduction of oxygen to water. Electrons originating from reduced cytochrome c in the intermembrane space (IMS) are transferred via the dinuclear copper A center (CU(A)) of subunit 2 and heme A of subunit 1 to the active site in subunit 1, a binuclear center (BNC) formed by heme A3 and copper B (CU(B)). The BNC reduces molecular oxygen to 2 water molecules using 4 electrons from cytochrome c in the IMS and 4 protons from the mitochondrial matrix. The sequence is that of Cytochrome c oxidase subunit 2 (MT-CO2) from Cuon alpinus (Dhole).